We begin with the raw amino-acid sequence, 315 residues long: MISVNELALEIFDNLANYSEDFNVAYHELDNGAKIVDCGVSVPGGYAAGRAFTEICMGGLGEVNFRMGQIKHVPMPFIEVSTDYPAISCLGAQKAGWTVKAGNYFAMGSGPARALALKPKHTYEVIGYEDESDDAVIALESDHLPNGEVMEKIAKDCGIDVENLCAVVAPTASLVGSIQVCGRCVETAVYKLNELGFDTRKITAAMGTAPIPPVKADATKAMGTTNDATIYHGQISLTMKAPDIVDFLEKIPSNKSKGYGKPFYEIFKEANFDFYQIDTSLFSPAEVTINELTEGKVYHVGEVNPDVTLKSFGYL.

The protein belongs to the MCH family.

It localises to the cytoplasm. It catalyses the reaction 5,10-methenyl-5,6,7,8-tetrahydromethanopterin + H2O = N(5)-formyl-5,6,7,8-tetrahydromethanopterin + H(+). The protein operates within one-carbon metabolism; methanogenesis from CO(2); 5,10-methenyl-5,6,7,8-tetrahydromethanopterin from CO(2): step 3/3. In terms of biological role, catalyzes the reversible interconversion of 5-formyl-H(4)MPT to methenyl-H(4)MPT(+). This chain is Methenyltetrahydromethanopterin cyclohydrolase, found in Methanospirillum hungatei JF-1 (strain ATCC 27890 / DSM 864 / NBRC 100397 / JF-1).